Here is a 195-residue protein sequence, read N- to C-terminus: Thymidine kinase (195 aa).

Residues 8–15 (GLMGSGKS) and 86–89 (DESQ) contribute to the ATP site. Glu-87 (proton acceptor) is an active-site residue. Zn(2+) contacts are provided by Cys-146, Cys-151, Cys-184, and His-187.

It belongs to the thymidine kinase family. As to quaternary structure, homotetramer.

It is found in the cytoplasm. It catalyses the reaction thymidine + ATP = dTMP + ADP + H(+). This chain is Thymidine kinase (tdk), found in Bacillus subtilis subsp. natto.